The chain runs to 407 residues: Phosphopentomutase (407 aa).

6 residues coordinate Mn(2+): D10, D306, H311, D347, H348, and H359.

Belongs to the phosphopentomutase family. Mn(2+) serves as cofactor.

The protein resides in the cytoplasm. It carries out the reaction 2-deoxy-alpha-D-ribose 1-phosphate = 2-deoxy-D-ribose 5-phosphate. The enzyme catalyses alpha-D-ribose 1-phosphate = D-ribose 5-phosphate. The protein operates within carbohydrate degradation; 2-deoxy-D-ribose 1-phosphate degradation; D-glyceraldehyde 3-phosphate and acetaldehyde from 2-deoxy-alpha-D-ribose 1-phosphate: step 1/2. Isomerase that catalyzes the conversion of deoxy-ribose 1-phosphate (dRib-1-P) and ribose 1-phosphate (Rib-1-P) to deoxy-ribose 5-phosphate (dRib-5-P) and ribose 5-phosphate (Rib-5-P), respectively. The chain is Phosphopentomutase from Buchnera aphidicola subsp. Acyrthosiphon pisum (strain 5A).